A 514-amino-acid polypeptide reads, in one-letter code: Putative binding protein HI_0213 (514 aa).

Positions 1–23 (MNNLFALCQRSAVIFSIIFTVVA) are cleaved as a signal peptide. Cysteine 24 carries N-palmitoyl cysteine lipidation. Cysteine 24 carries S-diacylglycerol cysteine lipidation.

The protein belongs to the bacterial solute-binding protein 5 family.

It localises to the cell membrane. Part of a binding-protein-dependent transport system. This is Putative binding protein HI_0213 from Haemophilus influenzae (strain ATCC 51907 / DSM 11121 / KW20 / Rd).